We begin with the raw amino-acid sequence, 635 residues long: UvrABC system protein C (635 aa).

Over residues 1–14 (MAQNHMSETMNDIS) the composition is skewed to polar residues. Positions 1-27 (MAQNHMSETMNDISAESPDQPEPPRTG) are disordered. The region spanning 40–117 (SSPGVYRMLD…IKQLKPKYNV (78 aa)) is the GIY-YIG domain. The 36-residue stretch at 227–262 (TKIQEELGAEMQAASEAMEYERAAALRDRIKALTQV) folds into the UVR domain.

Belongs to the UvrC family. In terms of assembly, interacts with UvrB in an incision complex.

The protein localises to the cytoplasm. Functionally, the UvrABC repair system catalyzes the recognition and processing of DNA lesions. UvrC both incises the 5' and 3' sides of the lesion. The N-terminal half is responsible for the 3' incision and the C-terminal half is responsible for the 5' incision. This chain is UvrABC system protein C, found in Ruegeria sp. (strain TM1040) (Silicibacter sp.).